Consider the following 254-residue polypeptide: tRNA uridine(34) hydroxylase (254 aa).

Positions 123–217 constitute a Rhodanese domain; the sequence is QDPNVILLDT…YLESIPESES (95 aa). Cys-177 acts as the Cysteine persulfide intermediate in catalysis.

It belongs to the TrhO family.

It carries out the reaction uridine(34) in tRNA + AH2 + O2 = 5-hydroxyuridine(34) in tRNA + A + H2O. Functionally, catalyzes oxygen-dependent 5-hydroxyuridine (ho5U) modification at position 34 in tRNAs. The sequence is that of tRNA uridine(34) hydroxylase from Legionella pneumophila (strain Corby).